Consider the following 70-residue polypeptide: Omega-conotoxin-like Bu1 (70 aa).

The N-terminal stretch at 1–22 is a signal peptide; sequence MKLTCVAIVAVLLLTACQLITA. Residues 23–45 constitute a propeptide that is removed on maturation; that stretch reads EDSRGTQLHRALRKTTKLSVSTR. 3 cysteine pairs are disulfide-bonded: Cys-46–Cys-61, Cys-53–Cys-65, and Cys-60–Cys-70.

Belongs to the conotoxin O1 superfamily. As to expression, expressed by the venom duct.

The protein localises to the secreted. Its function is as follows. Omega-conotoxins act at presynaptic membranes, they bind and block voltage-gated calcium channels (Cav). The polypeptide is Omega-conotoxin-like Bu1 (Conus bullatus (Bubble cone)).